The following is a 275-amino-acid chain: Serine/threonine-protein phosphatase PGAM5, mitochondrial (275 aa).

Residues 7 to 24 form a helical membrane-spanning segment; it reads LIAGGSAAAAILGVVAAG.

It belongs to the phosphoglycerate mutase family. BPG-dependent PGAM subfamily. In terms of processing, phosphorylated by the RIPK1/RIPK3 complex under necrotic conditions. This phosphorylation increases PGAM5 phosphatase activity.

It localises to the mitochondrion outer membrane. The catalysed reaction is O-phospho-L-seryl-[protein] + H2O = L-seryl-[protein] + phosphate. It catalyses the reaction O-phospho-L-threonyl-[protein] + H2O = L-threonyl-[protein] + phosphate. Displays phosphatase activity for serine/threonine residues. Has apparently no phosphoglycerate mutase activity. May be regulator of mitochondrial dynamics. May be a central mediator for programmed necrosis. The chain is Serine/threonine-protein phosphatase PGAM5, mitochondrial (pgam5) from Xenopus laevis (African clawed frog).